Reading from the N-terminus, the 32-residue chain is MSDIN-like toxin proprotein 3 (32 aa).

Positions 1-10 (MSDINATRLP) are excised as a propeptide. Residues 11–17 (SFFFPIP) constitute a cross-link (cyclopeptide (Ser-Pro)). The propeptide occupies 18–32 (CISDDIEMVLTRGER).

The protein belongs to the MSDIN fungal toxin family. In terms of processing, processed by the macrocyclase-peptidase enzyme POPB to yield a toxic cyclic heptapeptide. POPB first removes 10 residues from the N-terminus. Conformational trapping of the remaining peptide forces the enzyme to release this intermediate rather than proceed to macrocyclization. The enzyme rebinds the remaining peptide in a different conformation and catalyzes macrocyclization of the N-terminal 8 residues.

Functionally, probable toxin that belongs to the MSDIN-like toxin family responsible for a large number of food poisoning cases and deaths. The chain is MSDIN-like toxin proprotein 3 from Amanita phalloides (Death cap).